A 198-amino-acid polypeptide reads, in one-letter code: ATP-dependent Clp protease proteolytic subunit (198 aa).

The active-site Nucleophile is serine 102. Residue histidine 127 is part of the active site.

The protein belongs to the peptidase S14 family. Fourteen ClpP subunits assemble into 2 heptameric rings which stack back to back to give a disk-like structure with a central cavity, resembling the structure of eukaryotic proteasomes.

It localises to the cytoplasm. The catalysed reaction is Hydrolysis of proteins to small peptides in the presence of ATP and magnesium. alpha-casein is the usual test substrate. In the absence of ATP, only oligopeptides shorter than five residues are hydrolyzed (such as succinyl-Leu-Tyr-|-NHMec, and Leu-Tyr-Leu-|-Tyr-Trp, in which cleavage of the -Tyr-|-Leu- and -Tyr-|-Trp bonds also occurs).. Functionally, cleaves peptides in various proteins in a process that requires ATP hydrolysis. Has a chymotrypsin-like activity. Plays a major role in the degradation of misfolded proteins. The polypeptide is ATP-dependent Clp protease proteolytic subunit (Brachyspira hyodysenteriae (strain ATCC 49526 / WA1)).